The chain runs to 65 residues: Large ribosomal subunit protein uL29 (65 aa).

The protein belongs to the universal ribosomal protein uL29 family.

In Xylella fastidiosa (strain 9a5c), this protein is Large ribosomal subunit protein uL29 (rpmC).